Reading from the N-terminus, the 227-residue chain is N-acetyltransferase 8B (227 aa).

The Cytoplasmic portion of the chain corresponds to 1 to 42; sequence MAPYHIRKYQESDRKSVVGLLSGGMAEHAPATFRRLLKLPRT. Residues 43–63 form a helical; Signal-anchor for type II membrane protein membrane-spanning segment; sequence LILLLGGALALLLVSGSWILA. The 154-residue stretch at 61-214 folds into the N-acetyltransferase domain; that stretch reads ILALVFSLSL…ARLVDLHTVH (154 aa). Residues 64-227 lie on the Lumenal side of the membrane; the sequence is LVFSLSLLPA…HLPSAQAGRL (164 aa). K99 is subject to N6-acetyllysine.

It belongs to the NAT8 family. Acetylation on Lys-99 modulates enzymatic activity.

The protein localises to the endoplasmic reticulum-Golgi intermediate compartment membrane. It localises to the endoplasmic reticulum membrane. The catalysed reaction is L-lysyl-[protein] + acetyl-CoA = N(6)-acetyl-L-lysyl-[protein] + CoA + H(+). Its activity is regulated as follows. Allosterically regulated by acetylation at residue Lys-99. Functionally, endoplasmic reticulum (ER)-membrane-bound lysine N-acetyltransferase catalyzing the N6-acetylation of lysine residues in the lumen of the ER in various proteins, including PROM1 and BACE1, using acetyl-CoA as acetyl donor. Thereby, may regulate apoptosis through the acetylation and the regulation of the expression of PROM1. Acetylates and stabilizes BACE1 immature protein, leading to increased steady-state levels in neurons. By acting on BACE1 expression, may regulate amyloid beta-peptide formation. N(6)-lysine acetylation in ER maintains protein homeostasis and regulates reticulophagy. This is N-acetyltransferase 8B from Homo sapiens (Human).